The following is a 1019-amino-acid chain: Insulin-degrading enzyme (1019 aa).

A Zn(2+)-binding site is contributed by His108. The Proton acceptor role is filled by Glu111. Zn(2+)-binding residues include His112 and Glu189. Lys192 bears the N6-succinyllysine mark. Substrate is bound at residue 359–363 (LVGGQ). An ATP-binding site is contributed by Arg429. Lys697 carries the post-translational modification N6-succinyllysine. The SlyX motif signature appears at 853-858 (EKPPHY). Position 895 to 901 (895 to 901 (DKPKKLS)) interacts with ATP.

The protein belongs to the peptidase M16 family. In terms of assembly, homodimer. Can also form homotetramers. Requires Zn(2+) as cofactor.

The protein localises to the cytoplasm. The protein resides in the cytosol. It localises to the cell membrane. Its subcellular location is the secreted. The catalysed reaction is Degradation of insulin, glucagon and other polypeptides. No action on proteins.. Activated by ATP, other nucleotide triphosphates and small peptides. Inhibited by bacitracin. Its function is as follows. Plays a role in the cellular breakdown of insulin, APP peptides, IAPP peptides, natriuretic peptides, glucagon, bradykinin, kallidin, and other peptides, and thereby plays a role in intercellular peptide signaling. Substrate binding induces important conformation changes, making it possible to bind and degrade larger substrates, such as insulin. Contributes to the regulation of peptide hormone signaling cascades and regulation of blood glucose homeostasis via its role in the degradation of insulin, glucagon and IAPP. Plays a role in the degradation and clearance of APP-derived amyloidogenic peptides that are secreted by neurons and microglia. Degrades the natriuretic peptides ANP, BNP and CNP, inactivating their ability to raise intracellular cGMP. Also degrades an aberrant frameshifted 40-residue form of NPPA (fsNPPA) which is associated with familial atrial fibrillation in heterozygous patients. Involved in antigen processing. Produces both the N terminus and the C terminus of MAGEA3-derived antigenic peptide (EVDPIGHLY) that is presented to cytotoxic T lymphocytes by MHC class I. This is Insulin-degrading enzyme (IDE) from Bos taurus (Bovine).